The chain runs to 699 residues: Keratinocyte proline-rich protein (699 aa).

Position 436 is a phosphoserine (Ser-436). 2 stretches are compositionally biased toward pro residues: residues 448 to 477 and 513 to 533; these read PYPRPEPCPSPEPRPCPRPRPRPEPCPSPE and DPCPSPEPRPRPCPEPCPSPE. Positions 448–533 are disordered; the sequence is PYPRPEPCPS…PCPEPCPSPE (86 aa).

In terms of tissue distribution, expressed in the stratified squamous epithelial layers of the skin, esophagus and tongue.

It is found in the cytoplasm. The protein is Keratinocyte proline-rich protein (Kprp) of Rattus norvegicus (Rat).